We begin with the raw amino-acid sequence, 428 residues long: C4-dicarboxylate transport protein (428 aa).

The next 9 helical transmembrane spans lie at 4 to 24, 44 to 64, 76 to 96, 142 to 162, 184 to 204, 222 to 242, 289 to 309, 326 to 346, and 352 to 372; these read SLFK…ILLG, LIKM…IAGM, VALL…LIIV, IGAF…LFGF, VIFG…FGAM, LIIC…GTIA, VVGL…SIYL, IFHQ…AAGV, and IVLA…LALI.

It belongs to the dicarboxylate/amino acid:cation symporter (DAACS) (TC 2.A.23) family.

Its subcellular location is the cell inner membrane. Responsible for the transport of dicarboxylates such as succinate, fumarate, and malate from the periplasm across the membrane. The polypeptide is C4-dicarboxylate transport protein (Salmonella gallinarum (strain 287/91 / NCTC 13346)).